The chain runs to 150 residues: Large ribosomal subunit protein bL9 (150 aa).

This sequence belongs to the bacterial ribosomal protein bL9 family.

Binds to the 23S rRNA. The sequence is that of Large ribosomal subunit protein bL9 from Mycoplasma genitalium (strain ATCC 33530 / DSM 19775 / NCTC 10195 / G37) (Mycoplasmoides genitalium).